The following is a 617-amino-acid chain: Protein fem-1 homolog C (617 aa).

N-acetylmethionine is present on Met-1. 7 ANK repeats span residues Asp-2–Val-31, Asn-40–Val-70, Glu-82–Asn-111, Thr-115–Val-144, His-148–Arg-177, Lys-181–Lys-210, and Tyr-213–Thr-242. 2 TPR repeats span residues Ile-245–Asp-279 and Ser-338–Asn-371. 2 ANK repeats span residues Asn-481–Val-523 and Asp-527–Ala-556.

This sequence belongs to the fem-1 family. As to quaternary structure, component of a CRL2 E3 ubiquitin-protein ligase complex, also named ECS (Elongin BC-CUL2/5-SOCS-box protein) complex, composed of CUL2, Elongin BC (ELOB and ELOC), RBX1 and substrate-specific adapter FEM1C.

Its pathway is protein modification; protein ubiquitination. Substrate-recognition component of a Cul2-RING (CRL2) E3 ubiquitin-protein ligase complex of the DesCEND (destruction via C-end degrons) pathway, which recognizes a C-degron located at the extreme C terminus of target proteins, leading to their ubiquitination and degradation. The C-degron recognized by the DesCEND pathway is usually a motif of less than ten residues and can be present in full-length proteins, truncated proteins or proteolytically cleaved forms. The CRL2(FEM1C) complex specifically recognizes proteins with an arginine at the C-terminus: recognizes and binds proteins ending with -Lys/Arg-Xaa-Arg and -Lys/Arg-Xaa-Xaa-Arg C-degrons, such as SIL1 or OR51B2, leading to their ubiquitination and degradation. The CRL2(FEM1C) complex mediates ubiquitination and degradation of truncated MSRB1/SEPX1 selenoproteins produced by failed UGA/Sec decoding. The sequence is that of Protein fem-1 homolog C from Bos taurus (Bovine).